Reading from the N-terminus, the 98-residue chain is Cytochrome c2 (98 aa).

At Q1 the chain carries Pyrrolidone carboxylic acid. Residues C10, C13, H14, and M76 each contribute to the heme c site.

Belongs to the cytochrome c family. Post-translationally, binds 1 heme c group covalently per subunit.

The protein resides in the periplasm. Functionally, cytochrome c2 is found mainly in purple, non-sulfur, photosynthetic bacteria where it functions as the electron donor to the oxidized bacteriochlorophyll in the photophosphorylation pathway. However, it may also have a role in the respiratory chain and is found in some non-photosynthetic bacteria. The chain is Cytochrome c2 from Rhodoplanes tepidamans (Rhodoplanes cryptolactis).